A 282-amino-acid polypeptide reads, in one-letter code: Probable endonuclease 4 (282 aa).

Positions 66, 106, 143, 177, 180, 214, 227, 229, and 259 each coordinate Zn(2+).

The protein belongs to the AP endonuclease 2 family. Zn(2+) is required as a cofactor.

The catalysed reaction is Endonucleolytic cleavage to 5'-phosphooligonucleotide end-products.. In terms of biological role, endonuclease IV plays a role in DNA repair. It cleaves phosphodiester bonds at apurinic or apyrimidinic (AP) sites, generating a 3'-hydroxyl group and a 5'-terminal sugar phosphate. This is Probable endonuclease 4 from Nitratidesulfovibrio vulgaris (strain ATCC 29579 / DSM 644 / CCUG 34227 / NCIMB 8303 / VKM B-1760 / Hildenborough) (Desulfovibrio vulgaris).